Here is a 484-residue protein sequence, read N- to C-terminus: Antibiotic efflux pump outer membrane protein ArpC (484 aa).

The first 17 residues, 1-17, serve as a signal peptide directing secretion; the sequence is MTKSLLSLAVTAFILGG. Residue Cys-18 is the site of N-palmitoyl cysteine attachment. The S-diacylglycerol cysteine moiety is linked to residue Cys-18.

Belongs to the outer membrane factor (OMF) (TC 1.B.17) family.

The protein resides in the cell outer membrane. The outer membrane component of an antibiotic efflux pump. Confers resistance to numerous structurally unrelated antibiotics such as carbenicillin, chloramphenicol, erythromycin, novobiocin, streptomycin and tetracycline. Is not involved in organic solvent efflux. In Pseudomonas putida (Arthrobacter siderocapsulatus), this protein is Antibiotic efflux pump outer membrane protein ArpC (arpC).